We begin with the raw amino-acid sequence, 313 residues long: MSGIDPKRFGKVAVLFGGESAEREVSLTSGRLVLQGLRDAGIDAHPFDPAERPLSALKDEGFVRAFNALHGGYGENGQIQGALDFYGIRYTGSGVLGSALGLDKFRTKLVWQQTGVPTPPFETVMRGDDYAARATDIVAKLGLPLFVKPASEGSSVAVLKVKTADALPAALSEAATHDKIVIVEKSIEGGGEYTACIAGDLDLPLIKIVPAGEFYDYHAKYVANDTQYLIPCGLPAEQETELKRIARRAFDVLGCTDWGRADFMLDAAGNAYFLEVNTAPGMTDHSLPPKAARSIGISYSELVVKVLALTLND.

One can recognise an ATP-grasp domain in the interval 108–308 (KLVWQQTGVP…YSELVVKVLA (201 aa)). Position 138–193 (138–193 (VAKLGLPLFVKPASEGSSVAVLKVKTADALPAALSEAATHDKIVIVEKSIEGGGEY)) interacts with ATP. 3 residues coordinate Mg(2+): Asp262, Glu275, and Asn277.

This sequence belongs to the D-alanine--D-alanine ligase family. Requires Mg(2+) as cofactor. The cofactor is Mn(2+).

Its subcellular location is the cytoplasm. It carries out the reaction 2 D-alanine + ATP = D-alanyl-D-alanine + ADP + phosphate + H(+). It functions in the pathway cell wall biogenesis; peptidoglycan biosynthesis. Functionally, cell wall formation. This Burkholderia ambifaria (strain ATCC BAA-244 / DSM 16087 / CCUG 44356 / LMG 19182 / AMMD) (Burkholderia cepacia (strain AMMD)) protein is D-alanine--D-alanine ligase.